The primary structure comprises 361 residues: Phospho-N-acetylmuramoyl-pentapeptide-transferase (361 aa).

10 helical membrane passes run Thr25–Asp45, Thr72–Ala92, Leu95–Tyr115, Leu135–Ala155, Val169–Gly189, Gly200–Ala220, Leu240–Pro260, Ile264–Ala284, Ile289–Val309, and Gln338–Leu358.

This sequence belongs to the glycosyltransferase 4 family. MraY subfamily. Mg(2+) is required as a cofactor.

It localises to the cell inner membrane. The enzyme catalyses UDP-N-acetyl-alpha-D-muramoyl-L-alanyl-gamma-D-glutamyl-meso-2,6-diaminopimeloyl-D-alanyl-D-alanine + di-trans,octa-cis-undecaprenyl phosphate = di-trans,octa-cis-undecaprenyl diphospho-N-acetyl-alpha-D-muramoyl-L-alanyl-D-glutamyl-meso-2,6-diaminopimeloyl-D-alanyl-D-alanine + UMP. The protein operates within cell wall biogenesis; peptidoglycan biosynthesis. Functionally, catalyzes the initial step of the lipid cycle reactions in the biosynthesis of the cell wall peptidoglycan: transfers peptidoglycan precursor phospho-MurNAc-pentapeptide from UDP-MurNAc-pentapeptide onto the lipid carrier undecaprenyl phosphate, yielding undecaprenyl-pyrophosphoryl-MurNAc-pentapeptide, known as lipid I. The sequence is that of Phospho-N-acetylmuramoyl-pentapeptide-transferase from Rhodopseudomonas palustris (strain ATCC BAA-98 / CGA009).